The chain runs to 558 residues: Phosphatidylserine lipase ABHD16A (558 aa).

Transmembrane regions (helical) follow at residues 60-80 (ILAL…FAFF) and 93-113 (VVPF…VACL). Over 114–558 (RGIGRWTNPQ…AQNFQMPWHL (445 aa)) the chain is Cytoplasmic. Residues 281–407 (LVICCEGNAG…LVTRTVRQHL (127 aa)) enclose the AB hydrolase-1 domain. Active-site charge relay system residues include serine 355, aspartate 430, and histidine 507.

This sequence belongs to the AB hydrolase superfamily. ABHD16 family.

It localises to the membrane. It carries out the reaction 1-heptadecanoyl-2-(5Z,8Z,11Z,14Z-eicosatetraenoyl)-sn-glycero-3-phosphoserine + H2O = 1-heptadecanoyl-sn-glycero-3-phosphoserine + (5Z,8Z,11Z,14Z)-eicosatetraenoate + H(+). It catalyses the reaction 1-hexadecanoyl-2-(9Z-octadecenoyl)-sn-glycero-3-phospho-L-serine + H2O = 1-hexadecanoyl-sn-glycero-3-phospho-L-serine + (9Z)-octadecenoate + H(+). The catalysed reaction is 1-octadecanoyl-2-(9Z,12Z-octadecadienoyl)-sn-glycero-3-phosphoserine + H2O = 1-octadecanoyl-sn-glycero-3-phosphoserine + (9Z,12Z)-octadecadienoate + H(+). The enzyme catalyses 1-heptadecanoyl-2-(5Z,8Z,11Z,14Z-eicosatetraenoyl)-sn-glycero-3-phosphocholine + H2O = 1-heptadecanoyl-sn-glycero-3-phosphocholine + (5Z,8Z,11Z,14Z)-eicosatetraenoate + H(+). It carries out the reaction 1-hexadecanoyl-2-(9Z-octadecenoyl)-sn-glycero-3-phosphoglycerol + H2O = 1-hexadecanoyl-sn-glycero-3-phosphoglycerol + (9Z)-octadecenoate + H(+). It catalyses the reaction 1-hexadecanoyl-2-(9Z-octadecenoyl)-sn-glycero-3-phospho-(1D-myo-inositol) + H2O = 1-hexadecanoyl-sn-glycero-3-phospho-(1D-myo-inositol) + (9Z)-octadecenoate + H(+). The catalysed reaction is 1-heptadecanoyl-2-(5Z,8Z,11Z,14Z-eicosatetraenoyl)-sn-glycero-3-phosphoethanolamine + H2O = 1-heptadecanoyl-sn-glycero-3-phosphoethanolamine + (5Z,8Z,11Z,14Z)-eicosatetraenoate + H(+). The enzyme catalyses 1-hexadecanoyl-2-(9Z-octadecenoyl)-sn-glycero-3-phospho-(1'-sn-glycerol) + H2O = 1-hexadecanoyl-sn-glycero-3-phospho-(1'-sn-glycerol) + (9Z)-octadecenoate + H(+). It carries out the reaction Hydrolyzes glycerol monoesters of long-chain fatty acids.. It catalyses the reaction 1-tetradecanoylglycerol + H2O = tetradecanoate + glycerol + H(+). The catalysed reaction is 2-hexadecanoylglycerol + H2O = glycerol + hexadecanoate + H(+). The enzyme catalyses 1-(9Z-octadecenoyl)-glycerol + H2O = glycerol + (9Z)-octadecenoate + H(+). It carries out the reaction 2-(9Z-octadecenoyl)-glycerol + H2O = glycerol + (9Z)-octadecenoate + H(+). It catalyses the reaction 2-(9Z,12Z-octadecadienoyl)-glycerol + H2O = (9Z,12Z)-octadecadienoate + glycerol + H(+). The catalysed reaction is 1-(5Z,8Z,11Z,14Z-eicosatetraenoyl)-glycerol + H2O = glycerol + (5Z,8Z,11Z,14Z)-eicosatetraenoate + H(+). The enzyme catalyses 2-(5Z,8Z,11Z,14Z-eicosatetraenoyl)-glycerol + H2O = glycerol + (5Z,8Z,11Z,14Z)-eicosatetraenoate + H(+). It carries out the reaction prostaglandin D2-1-glycerol ester + H2O = prostaglandin D2 + glycerol + H(+). It catalyses the reaction 2-glyceryl-15-deoxy-Delta(12,14)-prostaglandin J2 + H2O = 15-deoxy-Delta(12,14)-prostaglandin J2 + glycerol + H(+). The catalysed reaction is 1-(9Z,12Z-octadecadienoyl)-glycerol + H2O = (9Z,12Z)-octadecadienoate + glycerol + H(+). With respect to regulation, inhibited by beta-lactone-based lipid inhibitors, such as beta-lactone palmostatin-B. Functionally, phosphatidylserine (PS) lipase that mediates the hydrolysis of phosphatidylserine to generate lysophosphatidylserine (LPS). LPS constitutes a class of signaling lipids that regulates immunological and neurological processes. Has no activity towards diacylglycerol, triacylglycerol or lysophosphatidylserine lipase. Also has monoacylglycerol lipase activity, with preference for 1-(9Z,12Z-octadecadienoyl)-glycerol (1-LG) and 2-glyceryl-15-deoxy-Delta(12,14)-prostaglandin J2 (15d-PGJ(2)-G). This Homo sapiens (Human) protein is Phosphatidylserine lipase ABHD16A.